The chain runs to 177 residues: dCTP deaminase (177 aa).

Residues 100-105 (RSSIAR) and D116 contribute to the dCTP site. E126 acts as the Proton donor/acceptor in catalysis. 2 residues coordinate dCTP: Y159 and Q166.

It belongs to the dCTP deaminase family. Homotrimer.

It catalyses the reaction dCTP + H2O + H(+) = dUTP + NH4(+). The protein operates within pyrimidine metabolism; dUMP biosynthesis; dUMP from dCTP (dUTP route): step 1/2. Catalyzes the deamination of dCTP to dUTP. The chain is dCTP deaminase from Korarchaeum cryptofilum (strain OPF8).